Consider the following 360-residue polypeptide: Chorismate synthase (360 aa).

Positions 48 and 54 each coordinate NADP(+). FMN contacts are provided by residues R125 to S127, N246 to A247, G286, K301 to S305, and R327.

This sequence belongs to the chorismate synthase family. Homotetramer. FMNH2 is required as a cofactor.

It carries out the reaction 5-O-(1-carboxyvinyl)-3-phosphoshikimate = chorismate + phosphate. The protein operates within metabolic intermediate biosynthesis; chorismate biosynthesis; chorismate from D-erythrose 4-phosphate and phosphoenolpyruvate: step 7/7. Catalyzes the anti-1,4-elimination of the C-3 phosphate and the C-6 proR hydrogen from 5-enolpyruvylshikimate-3-phosphate (EPSP) to yield chorismate, which is the branch point compound that serves as the starting substrate for the three terminal pathways of aromatic amino acid biosynthesis. This reaction introduces a second double bond into the aromatic ring system. This chain is Chorismate synthase, found in Haemophilus ducreyi (strain 35000HP / ATCC 700724).